Reading from the N-terminus, the 651-residue chain is ATP synthase F(1) complex catalytic subunit beta, mitochondrial (651 aa).

The transit peptide at 1-30 directs the protein to the mitochondrion; sequence MFVARRLSKNITQISKTAVKTSVRAVPVRG. 6 residues coordinate ADP: G259, V260, G261, K262, T263, and V264. Residue G259 participates in ATP binding. Phosphate contacts are provided by G259, V260, G261, K262, and T263. ATP-binding residues include G261, K262, T263, and V264. T263 serves as a coordination point for Mg(2+). Residue E288 participates in Mg(2+) binding. ATP is bound at residue R289.

This sequence belongs to the ATPase alpha/beta chains family. Homotrimer. Component of the ATP synthase complex composed at least of ATP5F1A/subunit alpha, ATP5F1B/subunit beta, ATP5MC1/subunit c (homooctomer), MT-ATP6/subunit a, MT-ATP8/subunit 8, ATP5ME/subunit e, ATP5MF/subunit f, ATP5MG/subunit g, ATP5MK/subunit k, ATP5MJ/subunit j, ATP5F1C/subunit gamma, ATP5F1D/subunit delta, ATP5F1E/subunit epsilon, ATP5PF/subunit F6, ATP5PB/subunit b, ATP5PD/subunit d, ATP5PO/subunit OSCP. ATP synthase complex consists of a soluble F(1) head domain (subunits alpha(3) and beta(3)) - the catalytic core - and a membrane F(0) domain - the membrane proton channel (subunits c, a, 8, e, f, g, k and j). These two domains are linked by a central stalk (subunits gamma, delta, and epsilon) rotating inside the F1 region and a stationary peripheral stalk (subunits F6, b, d, and OSCP).

The protein resides in the mitochondrion inner membrane. The enzyme catalyses ATP + H2O + 4 H(+)(in) = ADP + phosphate + 5 H(+)(out). In terms of biological role, catalytic subunit beta, of the mitochondrial membrane ATP synthase complex (F(1)F(0) ATP synthase or Complex V) that produces ATP from ADP in the presence of a proton gradient across the membrane which is generated by electron transport complexes of the respiratory chain. ATP synthase complex consist of a soluble F(1) head domain - the catalytic core - and a membrane F(1) domain - the membrane proton channel. These two domains are linked by a central stalk rotating inside the F(1) region and a stationary peripheral stalk. During catalysis, ATP synthesis in the catalytic domain of F(1) is coupled via a rotary mechanism of the central stalk subunits to proton translocation. In vivo, can only synthesize ATP although its ATP hydrolase activity can be activated artificially in vitro. With the subunit alpha (ATP5F1A), forms the catalytic core in the F(1) domain. In Dictyostelium discoideum (Social amoeba), this protein is ATP synthase F(1) complex catalytic subunit beta, mitochondrial.